A 229-amino-acid polypeptide reads, in one-letter code: MYDISGWKHVFKLDPNKELSDEHLEMICESGTDAVIVGGSDGVTIDNVLHMLVSIRRYAVPCVLEVSDVEAITPGFDFYYIPSVLNSRKVEWVTGVHHEALKEFGDIMDWDEIFMEGYCVLNPEAKVAQLTDAKCDVTEDDVIAYARLADKLLRLPIFYLEYSGTYGDVELVKNVKAELKQAKLYYGGGISNAEQAKEMAQYADTVVVGNIIYDDIKAALKTVKAVKGE.

Position 12 (K12) interacts with sn-glycerol 1-phosphate. Positions 14 and 40 each coordinate Mg(2+). Residues 159-164 (YLEYSG), G189, and 209-210 (GN) contribute to the sn-glycerol 1-phosphate site.

It belongs to the GGGP/HepGP synthase family. Group I subfamily. As to quaternary structure, homodimer. It depends on Mg(2+) as a cofactor.

It catalyses the reaction sn-glycerol 1-phosphate + all-trans-heptaprenyl diphosphate = 3-heptaprenyl-sn-glycero-1-phosphate + diphosphate. The protein operates within membrane lipid metabolism; glycerophospholipid metabolism. In terms of biological role, prenyltransferase that catalyzes in vivo the transfer of the heptaprenyl moiety of heptaprenyl pyrophosphate (HepPP; 35 carbon atoms) to the C3 hydroxyl of sn-glycerol-1-phosphate (G1P), producing heptaprenylglyceryl phosphate (HepGP). This reaction is an ether-bond-formation step in the biosynthesis of archaea-type G1P-based membrane lipids found in Bacillales. This Bacillus cereus (strain ZK / E33L) protein is Heptaprenylglyceryl phosphate synthase.